The following is a 546-amino-acid chain: Hexose oxidase (546 aa).

The 183-residue stretch at 40-222 folds into the FAD-binding PCMH-type domain; it reads IGTNIDFVYV…TKYYFKDLPM (183 aa). The 6-(S-cysteinyl)-8alpha-(pros-histidyl)-FAD (His-Cys) cross-link spans 79 to 138; sequence HCYEDFVFDECVKAIINVTGLVESGYDDDRGYFVSSGDTNWGSFKTLFRDHGRVLPGGSC. N-linked (GlcNAc...) asparagine glycans are attached at residues Asn-95 and Asn-358.

Belongs to the oxygen-dependent FAD-linked oxidoreductase family. Homodimer. It depends on FAD as a cofactor. Post-translationally, cleaved into 40 kDa and 29 kDa cleavage products, but the 2 polypeptide chains do not separate and seem to be physically linked together. The FAD cofactor is bound via a bicovalent 6-S-cysteinyl, 8alpha-N1-histidyl FAD linkage.

The catalysed reaction is beta-D-glucose + O2 = D-glucono-1,5-lactone + H2O2. It catalyses the reaction D-galactose + O2 = D-galactono-1,5-lactone + H2O2. The enzyme catalyses D-maltose + O2 = D-maltobiono-1,5-lactone + H2O2. It carries out the reaction D-cellobiose + O2 = D-cellobiono-1,5-lactone + H2O2. The catalysed reaction is beta-lactose + O2 = lactobiono-1,5-lactone + H2O2. Its function is as follows. Catalyzes the selective oxidation of C1 hydroxyl moieties on mono- and disaccharides with concomitant reduction of molecular oxygen to hydrogen peroxide. This results in the formation of the corresponding lactones, which typically undergo spontaneous hydrolysis. Hexose oxidase is able to oxidize a variety of substrates including D-glucose, D-galactose, maltose, cellobiose, and lactose. The protein is Hexose oxidase (HOX) of Chondrus crispus (Carrageen Irish moss).